The chain runs to 198 residues: Molybdenum cofactor guanylyltransferase (198 aa).

GTP-binding positions include L14–G16, K27, D73, and D103. D103 contributes to the Mg(2+) binding site.

It belongs to the MobA family. Monomer. It depends on Mg(2+) as a cofactor.

It localises to the cytoplasm. The enzyme catalyses Mo-molybdopterin + GTP + H(+) = Mo-molybdopterin guanine dinucleotide + diphosphate. Transfers a GMP moiety from GTP to Mo-molybdopterin (Mo-MPT) cofactor (Moco or molybdenum cofactor) to form Mo-molybdopterin guanine dinucleotide (Mo-MGD) cofactor. The chain is Molybdenum cofactor guanylyltransferase from Pseudomonas paraeruginosa (strain DSM 24068 / PA7) (Pseudomonas aeruginosa (strain PA7)).